The chain runs to 160 residues: Transcription elongation factor GreA (160 aa).

Positions 1–72 (MAEKTYPMTL…QISSLETKIR (72 aa)) form a coiled coil.

It belongs to the GreA/GreB family.

Its function is as follows. Necessary for efficient RNA polymerase transcription elongation past template-encoded arresting sites. The arresting sites in DNA have the property of trapping a certain fraction of elongating RNA polymerases that pass through, resulting in locked ternary complexes. Cleavage of the nascent transcript by cleavage factors such as GreA or GreB allows the resumption of elongation from the new 3'terminus. GreA releases sequences of 2 to 3 nucleotides. In Streptococcus gordonii (strain Challis / ATCC 35105 / BCRC 15272 / CH1 / DL1 / V288), this protein is Transcription elongation factor GreA.